A 191-amino-acid polypeptide reads, in one-letter code: Ribonuclease HII (191 aa).

Positions 7–191 constitute an RNase H type-2 domain; the sequence is ILMAGVDEVG…YSPVADLISK (185 aa). Positions 13, 14, and 103 each coordinate a divalent metal cation.

The protein belongs to the RNase HII family. It depends on Mn(2+) as a cofactor. Mg(2+) is required as a cofactor.

The protein resides in the cytoplasm. It carries out the reaction Endonucleolytic cleavage to 5'-phosphomonoester.. Its function is as follows. Endonuclease that specifically degrades the RNA of RNA-DNA hybrids. The sequence is that of Ribonuclease HII from Legionella pneumophila (strain Corby).